The following is a 454-amino-acid chain: Transcription factor bHLH123 (454 aa).

The span at 101–113 (SNANANTTSSTSS) shows a compositional bias: low complexity. 4 disordered regions span residues 101-127 (SNAN…HHQA), 185-228 (ATTT…QFGS), 270-348 (AAAG…KRKE), and 398-417 (GASL…VSEE). 2 stretches are compositionally biased toward polar residues: residues 185–195 (ATTTTPNSSSG) and 207–228 (SSDQ…QFGS). Residues 303 to 324 (EQPKNISEIRDSSSNEVKRGGN) show a composition bias toward basic and acidic residues. In terms of domain architecture, bHLH spans 334–383 (KSEAASPSPAFKRKEKMGDRIAALQQLVSPFGKTDAASVLSEAIEYIKFL).

As to quaternary structure, homodimer.

The protein resides in the nucleus. This is Transcription factor bHLH123 (BHLH123) from Arabidopsis thaliana (Mouse-ear cress).